A 176-amino-acid chain; its full sequence is Inner membrane-spanning protein YciB (176 aa).

5 helical membrane passes run 24 to 44 (TATAVAIGATLVQIAWVAFRH), 49 to 69 (PMLWVSLGVVTVFGGATLVLH), 76 to 96 (WKPTVLYWAFSVVLVVSALGF), 121 to 141 (YVWAVFFVLLGILNLFVAYNF), and 149 to 169 (FKLFGATGCLVVFIVGQSLWL).

Belongs to the YciB family.

It is found in the cell inner membrane. Plays a role in cell envelope biogenesis, maintenance of cell envelope integrity and membrane homeostasis. This chain is Inner membrane-spanning protein YciB, found in Paraburkholderia phymatum (strain DSM 17167 / CIP 108236 / LMG 21445 / STM815) (Burkholderia phymatum).